A 1154-amino-acid polypeptide reads, in one-letter code: Caspase recruitment domain-containing protein 11 (1154 aa).

Residues Glu-18–Glu-110 form the CARD domain. The linker stretch occupies residues Pro-111–Thr-128. The stretch at Phe-130–Leu-449 forms a coiled coil. Phosphoserine is present on residues Ser-448 and Ser-466. Positions Pro-450–Val-666 are inhibitory domain (ID). Residues Gln-460–Glu-626 are disordered. Residues Glu-473–Pro-484 are compositionally biased toward acidic residues. Phosphoserine is present on Ser-512. Positions Arg-518 to Glu-529 are enriched in basic and acidic residues. Positions Ala-534–Ser-562 are enriched in polar residues. Phosphoserine is present on Ser-535. Ser-559 carries the phosphoserine; by PKC/PRKCB and PKC/PRKCQ modification. Over residues Ile-573–Val-587 the composition is skewed to basic and acidic residues. Ser-593 carries the phosphoserine modification. A compositionally biased stretch (low complexity) spans Ser-614–Ser-625. Ser-644 and Ser-652 each carry phosphoserine; by PKC/PRKCB and PKC/PRKCQ. One can recognise a PDZ domain in the interval Gln-667–His-755. Phosphoserine occurs at positions 886 and 925. Positions Arg-973 to Gly-1140 constitute a Guanylate kinase-like domain.

As to quaternary structure, homodimer; disulfide-linked. Homomultimer; polymerizes following activation, forming a nucleating helical template that seeds BCL10-filament formation via a CARD-CARD interaction. Interacts (via CARD domain) with BCL10 (via CARD domain); interaction takes place following CARD11 activation and polymerization, leading to the formation of a filamentous CBM complex assembly. Component of a CBM complex (CARD11-BCL10-MALT1) complex involved in NF-kappa-B activation. Found in a membrane raft complex, at least composed of BCL10, CARD11, DPP4 and IKBKB. Interacts (via PDZ domain) with DPP4 (via cytoplasmic tail). Post-translationally, phosphorylation at Ser-559, Ser-644 and Ser-652 by PRKCB and PRKCQ leads to a shift from an inactive to an active form that activates the NF-kappa-B signaling. In terms of tissue distribution, detected in adult peripheral blood leukocytes, thymus, spleen and liver. Also found in promyelocytic leukemia HL-60 cells, chronic myelogenous leukemia K-562 cells, Burkitt's lymphoma Raji cells and colorectal adenocarcinoma SW480 cells. Not detected in HeLaS3, MOLT-4, A-549 and G431 cells.

Its subcellular location is the cytoplasm. The protein resides in the membrane raft. Its activity is regulated as follows. Maintained in an autoinhibited state via homodimerization in which the CARD domain forms an extensive interaction with the adjacent linker and coiled-coil regions. Activation downstream of T-cell receptor (TCR) by phosphorylation by PRKCB and PRKCQ triggers CARD11 homooligomerization and BCL10 recruitment, followed by activation of NF-kappa-B. Functionally, adapter protein that plays a key role in adaptive immune response by transducing the activation of NF-kappa-B downstream of T-cell receptor (TCR) and B-cell receptor (BCR) engagement. Transduces signals downstream TCR or BCR activation via the formation of a multiprotein complex together with BCL10 and MALT1 that induces NF-kappa-B and MAP kinase p38 (MAPK11, MAPK12, MAPK13 and/or MAPK14) pathways. Upon activation in response to TCR or BCR triggering, CARD11 homooligomerizes to form a nucleating helical template that recruits BCL10 via CARD-CARD interaction, thereby promoting polymerization of BCL10 and subsequent recruitment of MALT1: this leads to I-kappa-B kinase (IKK) phosphorylation and degradation, and release of NF-kappa-B proteins for nuclear translocation. Its binding to DPP4 induces T-cell proliferation and NF-kappa-B activation in a T-cell receptor/CD3-dependent manner. Promotes linear ubiquitination of BCL10 by promoting the targeting of BCL10 to RNF31/HOIP. Stimulates the phosphorylation of BCL10. Also activates the TORC1 signaling pathway. The polypeptide is Caspase recruitment domain-containing protein 11 (Homo sapiens (Human)).